Reading from the N-terminus, the 442-residue chain is Protein IQ-DOMAIN 33 (442 aa).

Residues 159–188 (EEDAAVIIQSAFRSYLAIRRSKEEEETFAK) form the IQ domain. The segment at 184–212 (ETFAKEESFSGEESQDNASMGTSLEAQTG) is disordered. Over residues 199 to 212 (DNASMGTSLEAQTG) the composition is skewed to polar residues. The segment at 270-282 (RERALAYAFSQQL) is calmodulin-binding. The segment at 375–442 (EKSSFKPSIS…ETSHKLNSST (68 aa)) is disordered. Residues 383-402 (ISKRKSVPSYKSQRKHHKLQ) show a composition bias toward basic residues. A Nuclear localization signal motif is present at residues 385–392 (KRKSVPSY).

It belongs to the IQD family. In terms of assembly, binds to multiple calmodulin (CaM) in the presence of Ca(2+) and CaM-like proteins.

The protein resides in the nucleus. In terms of biological role, may be involved in cooperative interactions with calmodulins or calmodulin-like proteins. Recruits calmodulin proteins to microtubules, thus being a potential scaffold in cellular signaling and trafficking. May associate with nucleic acids and regulate gene expression at the transcriptional or post-transcriptional level. In Arabidopsis thaliana (Mouse-ear cress), this protein is Protein IQ-DOMAIN 33.